The following is a 656-amino-acid chain: UvrABC system protein B (656 aa).

The 386-residue stretch at 29–414 folds into the Helicase ATP-binding domain; sequence KLSEFKTKQQ…SLSQNNVIEQ (386 aa). 42–49 contributes to the ATP binding site; it reads GATGTGKT. Positions 95-118 match the Beta-hairpin motif; it reads YFDFYQPEAYLPSKGIYIEKSATV. The region spanning 434–596 is the Helicase C-terminal domain; sequence QVEDLIEEII…KTPKTVVKPL (163 aa). The 36-residue stretch at 614–649 folds into the UVR domain; the sequence is AALIKQLTKEMKKAAANQNYELAIEIRDSIFELEKE.

It belongs to the UvrB family. In terms of assembly, forms a heterotetramer with UvrA during the search for lesions. Interacts with UvrC in an incision complex.

It localises to the cytoplasm. Its function is as follows. The UvrABC repair system catalyzes the recognition and processing of DNA lesions. A damage recognition complex composed of 2 UvrA and 2 UvrB subunits scans DNA for abnormalities. Upon binding of the UvrA(2)B(2) complex to a putative damaged site, the DNA wraps around one UvrB monomer. DNA wrap is dependent on ATP binding by UvrB and probably causes local melting of the DNA helix, facilitating insertion of UvrB beta-hairpin between the DNA strands. Then UvrB probes one DNA strand for the presence of a lesion. If a lesion is found the UvrA subunits dissociate and the UvrB-DNA preincision complex is formed. This complex is subsequently bound by UvrC and the second UvrB is released. If no lesion is found, the DNA wraps around the other UvrB subunit that will check the other stand for damage. The polypeptide is UvrABC system protein B (Mycoplasma genitalium (strain ATCC 33530 / DSM 19775 / NCTC 10195 / G37) (Mycoplasmoides genitalium)).